The sequence spans 417 residues: Tyrosine--tRNA ligase (417 aa).

An L-tyrosine-binding site is contributed by Tyr-40. The 'HIGH' region signature appears at 45-54 (ATAASLHVGH). L-tyrosine is bound by residues Tyr-177 and Gln-181. A 'KMSKS' region motif is present at residues 237–241 (KMGKS). An ATP-binding site is contributed by Lys-240. Residues 351–414 (ISVVQLITRS…AGRKRHALIK (64 aa)) enclose the S4 RNA-binding domain.

Belongs to the class-I aminoacyl-tRNA synthetase family. TyrS type 1 subfamily. In terms of assembly, homodimer.

The protein resides in the cytoplasm. The catalysed reaction is tRNA(Tyr) + L-tyrosine + ATP = L-tyrosyl-tRNA(Tyr) + AMP + diphosphate + H(+). In terms of biological role, catalyzes the attachment of tyrosine to tRNA(Tyr) in a two-step reaction: tyrosine is first activated by ATP to form Tyr-AMP and then transferred to the acceptor end of tRNA(Tyr). The protein is Tyrosine--tRNA ligase of Dinoroseobacter shibae (strain DSM 16493 / NCIMB 14021 / DFL 12).